We begin with the raw amino-acid sequence, 160 residues long: MYTITKGPSKLVAQRRTGPTQQQVESRLGELLKCRQPVPPTALPAHLQPSAQTQGPWPLASSGPRLVFNRVNGRRPLTTSPSLEGTQETYTVAHEENVRFVSEAWQQVERQLDGGPADESGPRPVQYVESTPDPRLQNFVPIDLDEWWAQQFLAKITNCS.

M1 is modified (N-acetylmethionine). Residues 1–22 form a disordered region; sequence MYTITKGPSKLVAQRRTGPTQQ. R35 is subject to Omega-N-methylarginine. The segment at 43–64 is disordered; that stretch reads LPAHLQPSAQTQGPWPLASSGP. Position 61 is a phosphoserine (S61). R65 carries the omega-N-methylarginine modification. S82 carries the phosphoserine modification.

Belongs to the MCRIP family. Interacts with DDX6. Interacts with MCRIP1.

The protein localises to the cytoplasm. The protein resides in the stress granule. It localises to the nucleus. This is MAPK regulated corepressor interacting protein 2 (Mcrip2) from Mus musculus (Mouse).